We begin with the raw amino-acid sequence, 315 residues long: Methionyl-tRNA formyltransferase (315 aa).

A (6S)-5,6,7,8-tetrahydrofolate-binding site is contributed by 113–116 (SLLP).

It belongs to the Fmt family.

It catalyses the reaction L-methionyl-tRNA(fMet) + (6R)-10-formyltetrahydrofolate = N-formyl-L-methionyl-tRNA(fMet) + (6S)-5,6,7,8-tetrahydrofolate + H(+). In terms of biological role, attaches a formyl group to the free amino group of methionyl-tRNA(fMet). The formyl group appears to play a dual role in the initiator identity of N-formylmethionyl-tRNA by promoting its recognition by IF2 and preventing the misappropriation of this tRNA by the elongation apparatus. The chain is Methionyl-tRNA formyltransferase from Escherichia coli O17:K52:H18 (strain UMN026 / ExPEC).